Reading from the N-terminus, the 249-residue chain is V-type proton ATPase subunit D 2 (249 aa).

This sequence belongs to the V-ATPase D subunit family. In terms of assembly, V-ATPase is a heteromultimeric enzyme made up of two complexes: the ATP-hydrolytic V1 complex and the proton translocation V0 complex. The V1 complex consists of three catalytic AB heterodimers that form a heterohexamer, three peripheral stalks each consisting of EG heterodimers, one central rotor including subunits D and F, and the regulatory subunits C and H. The proton translocation complex V0 consists of the proton transport subunit a, a ring of proteolipid subunits c9c'', rotary subunit d, subunits e and f, and the accessory subunits VhaAC45 and ATP6AP2.

Subunit of the V1 complex of vacuolar(H+)-ATPase (V-ATPase), a multisubunit enzyme composed of a peripheral complex (V1) that hydrolyzes ATP and a membrane integral complex (V0) that translocates protons. V-ATPase is responsible for acidifying and maintaining the pH of intracellular compartments and in some cell types, is targeted to the plasma membrane, where it is responsible for acidifying the extracellular environment. This chain is V-type proton ATPase subunit D 2 (Vha36-3), found in Drosophila melanogaster (Fruit fly).